The following is a 466-amino-acid chain: MAKSPAARKGXPPVAVAVTAALALLIALLSPGVAQAAGLTATVTKESSWDNGYSASVTVRNDTSSTVSQWEVVLTLPGGTTVAQVWNAQHTSSGNSHTFTGVSWNSTIPPGGTASSGFIASGSGEPTHCTINGAPCDEGSEPGGPGGPGTPSPDPGTQPGTGTPVERYGKVQVCGTQLCDEHGNPVQLRGMSTHGIQWFDHCLTDSSLDALAYDWKADIIRLSMYIQEDGYETNPRGFTDRMHQLIDMATARGLYVIVDWHILTPGDPHYNLDRAKTFFAEIAQRHASKTNVLYEIANEPNGVSWASIKSYAEEVIPVIRQRDPDSVIIVGTRGWSSLGVSEGSGPAEIAANPVNASNIMYAFHFYAASHRDNYLNALREASELFPVFVTEFGTETYTGDGANDFQMADRYIDLMAERKIGWTKWNYSDDFRSGAVFQPGTCASGGPWSGSSLKASGQWVRSKLQS.

The signal sequence occupies residues 1–36; the sequence is MAKSPAARKGXPPVAVAVTAALALLIALLSPGVAQA. A CBM2 domain is found at 37 to 139; sequence AGLTATVTKE…TINGAPCDEG (103 aa). Positions 129-166 are disordered; it reads CTINGAPCDEGSEPGGPGGPGTPSPDPGTQPGTGTPVE. The active-site Proton donor is Glu-299. Residue Glu-391 is the Nucleophile of the active site.

It belongs to the glycosyl hydrolase 5 (cellulase A) family.

It catalyses the reaction Endohydrolysis of (1-&gt;4)-beta-D-glucosidic linkages in cellulose, lichenin and cereal beta-D-glucans.. The protein operates within glycan metabolism; cellulose degradation. The polypeptide is Endoglucanase E-5 (celE) (Thermobifida fusca (Thermomonospora fusca)).